Reading from the N-terminus, the 291-residue chain is 33 kDa chaperonin (291 aa).

2 disulfide bridges follow: Cys229–Cys231 and Cys262–Cys265.

The protein belongs to the HSP33 family. Post-translationally, under oxidizing conditions two disulfide bonds are formed involving the reactive cysteines. Under reducing conditions zinc is bound to the reactive cysteines and the protein is inactive.

It localises to the cytoplasm. In terms of biological role, redox regulated molecular chaperone. Protects both thermally unfolding and oxidatively damaged proteins from irreversible aggregation. Plays an important role in the bacterial defense system toward oxidative stress. This is 33 kDa chaperonin from Vibrio parahaemolyticus serotype O3:K6 (strain RIMD 2210633).